The chain runs to 101 residues: NAD(P)H-quinone oxidoreductase subunit 4L, chloroplastic (101 aa).

The next 3 membrane-spanning stretches (helical) occupy residues 2 to 22 (LLEHVLVLSAYLFSIGIYGLI), 32 to 52 (MCLELILNAVNMNFVTFSDFF), and 61 to 81 (IFSIFVIAIAAAEAAIGSAIV).

It belongs to the complex I subunit 4L family. As to quaternary structure, NDH is composed of at least 16 different subunits, 5 of which are encoded in the nucleus.

Its subcellular location is the plastid. It is found in the chloroplast thylakoid membrane. The catalysed reaction is a plastoquinone + NADH + (n+1) H(+)(in) = a plastoquinol + NAD(+) + n H(+)(out). The enzyme catalyses a plastoquinone + NADPH + (n+1) H(+)(in) = a plastoquinol + NADP(+) + n H(+)(out). Its function is as follows. NDH shuttles electrons from NAD(P)H:plastoquinone, via FMN and iron-sulfur (Fe-S) centers, to quinones in the photosynthetic chain and possibly in a chloroplast respiratory chain. The immediate electron acceptor for the enzyme in this species is believed to be plastoquinone. Couples the redox reaction to proton translocation, and thus conserves the redox energy in a proton gradient. This chain is NAD(P)H-quinone oxidoreductase subunit 4L, chloroplastic, found in Carica papaya (Papaya).